The primary structure comprises 441 residues: tRNA modification GTPase MnmE (441 aa).

The (6S)-5-formyl-5,6,7,8-tetrahydrofolate site is built by arginine 21, glutamate 79, and lysine 118. Positions 214–367 (GIHITILGAP…LVAELARVVE (154 aa)) constitute a TrmE-type G domain. GTP-binding positions include 224-229 (NAGKSS), 243-249 (SAQAGTT), and 268-271 (DTAG). Mg(2+) contacts are provided by serine 228 and threonine 249. Lysine 441 lines the (6S)-5-formyl-5,6,7,8-tetrahydrofolate pocket.

Belongs to the TRAFAC class TrmE-Era-EngA-EngB-Septin-like GTPase superfamily. TrmE GTPase family. As to quaternary structure, homodimer. Heterotetramer of two MnmE and two MnmG subunits. Requires K(+) as cofactor.

The protein resides in the cytoplasm. Functionally, exhibits a very high intrinsic GTPase hydrolysis rate. Involved in the addition of a carboxymethylaminomethyl (cmnm) group at the wobble position (U34) of certain tRNAs, forming tRNA-cmnm(5)s(2)U34. This is tRNA modification GTPase MnmE from Paramagnetospirillum magneticum (strain ATCC 700264 / AMB-1) (Magnetospirillum magneticum).